An 87-amino-acid chain; its full sequence is RNA-binding protein Hfq (87 aa).

Positions 9–68 constitute a Sm domain; that stretch reads DPFLNALRRERIPVSIYLVNGIKLQGQIESFDQFVILLKNTVNQMVYKHAISTVVPARPV. Residues 65 to 87 form a disordered region; sequence ARPVSHHSGDRPQGDRPQEKSED. Residues 71–87 show a composition bias toward basic and acidic residues; it reads HSGDRPQGDRPQEKSED.

This sequence belongs to the Hfq family. Homohexamer.

In terms of biological role, RNA chaperone that binds small regulatory RNA (sRNAs) and mRNAs to facilitate mRNA translational regulation in response to envelope stress, environmental stress and changes in metabolite concentrations. Also binds with high specificity to tRNAs. The protein is RNA-binding protein Hfq of Vibrio parahaemolyticus serotype O3:K6 (strain RIMD 2210633).